The sequence spans 435 residues: MAPFGRNLLKTRHKNRSPTKDMDPEEKEIVVWVCQEEKIVCGLTKRTTSIDVIQALLEEHEATFGEKRFLLGKASDYCIVEKWRGSERALPPLTRILKLWKAWGDEQPNMQFVLVKTDAFLPVPLWRTAETKLVQNNEKPWELSPANYMKTLPPDKQKRIVRKTFRKLAKIRQDTGSHDRDNMECLVHLIISQDHTIHQQVQRMKELDMEIEKCEAKIHLDRIGNDGADYVQEAYLMPRSSEEEQKLDFQSEDNQTLEDLNDGEGVSQLEEQLQYYRALIDKLSAEIEREVKGAGTDGSEDMEGAAACELENSDLESVKCDLEKSMKAGLKIHSHLSGIQREIKYSDSLLQMKAREYELLAKEFSSLHISSKDGCQGKENRGKEAEASSSNGEIPPLTQRVFNTYTNDTDSDTGISSNHSQDSETTLGDVLLLAT.

The segment at 1-22 (MAPFGRNLLKTRHKNRSPTKDM) is disordered. In terms of domain architecture, Ras-associating spans 25 to 119 (EEKEIVVWVC…MQFVLVKTDA (95 aa)). The stretch at 195–291 (HTIHQQVQRM…KLSAEIEREV (97 aa)) forms a coiled coil. The disordered stretch occupies residues 371–423 (SKDGCQGKENRGKEAEASSSNGEIPPLTQRVFNTYTNDTDSDTGISSNHSQDS). Residues 375–386 (CQGKENRGKEAE) show a composition bias toward basic and acidic residues. Residues 400 to 423 (RVFNTYTNDTDSDTGISSNHSQDS) show a composition bias toward polar residues.

In terms of assembly, interacts with PAM. In terms of tissue distribution, testis, kidney, skeletal muscle, liver, lung, brain, heart, pituitary gland, adrenal gland and ovary.

The protein localises to the endosome. In terms of biological role, may play a role in regulating vesicuar trafficking in cells. This Rattus norvegicus (Rat) protein is Ras association domain-containing protein 9 (Rassf9).